The sequence spans 734 residues: Photosystem I P700 chlorophyll a apoprotein A2 (734 aa).

8 consecutive transmembrane segments (helical) span residues 46-69, 135-158, 175-199, 273-291, 330-353, 369-395, 417-439, and 517-535; these read IFAS…FHVA, LYTG…LHLQ, LNHH…HVAI, IAHH…GHMY, IHFQ…QHMY, AALY…IFFI, AIIS…LYVH, and FLVH…LILV. [4Fe-4S] cluster-binding residues include Cys-559 and Cys-568. 2 consecutive transmembrane segments (helical) span residues 575-596 and 643-665; these read AFYL…YWHW and LSVW…MFLI. Chlorophyll a contacts are provided by His-654, Met-662, and Tyr-670. Trp-671 is a binding site for phylloquinone. The chain crosses the membrane as a helical span at residues 707–727; it reads LVGLAHFSVGYIFTYAAFLIA.

It belongs to the PsaA/PsaB family. The PsaA/B heterodimer binds the P700 chlorophyll special pair and subsequent electron acceptors. PSI consists of a core antenna complex that captures photons, and an electron transfer chain that converts photonic excitation into a charge separation. The eukaryotic PSI reaction center is composed of at least 11 subunits. Requires P700 is a chlorophyll a/chlorophyll a' dimer, A0 is one or more chlorophyll a, A1 is one or both phylloquinones and FX is a shared 4Fe-4S iron-sulfur center. as cofactor.

It is found in the plastid. The protein resides in the chloroplast thylakoid membrane. It catalyses the reaction reduced [plastocyanin] + hnu + oxidized [2Fe-2S]-[ferredoxin] = oxidized [plastocyanin] + reduced [2Fe-2S]-[ferredoxin]. Functionally, psaA and PsaB bind P700, the primary electron donor of photosystem I (PSI), as well as the electron acceptors A0, A1 and FX. PSI is a plastocyanin-ferredoxin oxidoreductase, converting photonic excitation into a charge separation, which transfers an electron from the donor P700 chlorophyll pair to the spectroscopically characterized acceptors A0, A1, FX, FA and FB in turn. Oxidized P700 is reduced on the lumenal side of the thylakoid membrane by plastocyanin. This chain is Photosystem I P700 chlorophyll a apoprotein A2, found in Aethionema grandiflorum (Persian stone-cress).